The sequence spans 426 residues: Enolase (426 aa).

Residue Q165 participates in (2R)-2-phosphoglycerate binding. The active-site Proton donor is the E209. The Mg(2+) site is built by D244, E287, and D313. Positions 338, 367, 368, and 389 each coordinate (2R)-2-phosphoglycerate. The active-site Proton acceptor is K338.

It belongs to the enolase family. The cofactor is Mg(2+).

It is found in the cytoplasm. The protein resides in the secreted. The protein localises to the cell surface. It carries out the reaction (2R)-2-phosphoglycerate = phosphoenolpyruvate + H2O. Its pathway is carbohydrate degradation; glycolysis; pyruvate from D-glyceraldehyde 3-phosphate: step 4/5. Its function is as follows. Catalyzes the reversible conversion of 2-phosphoglycerate (2-PG) into phosphoenolpyruvate (PEP). It is essential for the degradation of carbohydrates via glycolysis. The chain is Enolase from Methanococcus maripaludis (strain DSM 14266 / JCM 13030 / NBRC 101832 / S2 / LL).